A 121-amino-acid chain; its full sequence is Chorion protein S15 (121 aa).

Residues 1–18 form the signal peptide; sequence MKYLFVCVSLALFAYISA.

This sequence belongs to the chorion protein S15/S18 family.

The protein resides in the secreted. Functionally, chorion membrane (egg shell) protein; plays a role in protecting the egg from the environment. This Drosophila subobscura (Fruit fly) protein is Chorion protein S15 (Cp15).